The sequence spans 226 residues: 7-carboxy-7-deazaguanine synthase (226 aa).

Substrate-binding positions include 10–12 and arginine 25; that span reads LQG. The 206-residue stretch at 16–221 folds into the Radical SAM core domain; that stretch reads YTGIPCIFVR…LQTHKFIWTP (206 aa). [4Fe-4S] cluster-binding residues include cysteine 29, cysteine 33, and cysteine 36. Residue serine 38 participates in Mg(2+) binding. Residue threonine 69 participates in substrate binding. Position 71 (glycine 71) interacts with S-adenosyl-L-methionine.

The protein belongs to the radical SAM superfamily. 7-carboxy-7-deazaguanine synthase family. Homodimer. Requires [4Fe-4S] cluster as cofactor. It depends on S-adenosyl-L-methionine as a cofactor. Mg(2+) serves as cofactor.

The enzyme catalyses 6-carboxy-5,6,7,8-tetrahydropterin + H(+) = 7-carboxy-7-deazaguanine + NH4(+). The protein operates within purine metabolism; 7-cyano-7-deazaguanine biosynthesis. In terms of biological role, catalyzes the complex heterocyclic radical-mediated conversion of 6-carboxy-5,6,7,8-tetrahydropterin (CPH4) to 7-carboxy-7-deazaguanine (CDG), a step common to the biosynthetic pathways of all 7-deazapurine-containing compounds. This chain is 7-carboxy-7-deazaguanine synthase, found in Koribacter versatilis (strain Ellin345).